The primary structure comprises 545 residues: Zinc finger protein 697 (545 aa).

The segment at 1 to 143 (MKQEDNQGVC…EQPAPPVLPW (143 aa)) is disordered. Residue lysine 2 forms a Glycyl lysine isopeptide (Lys-Gly) (interchain with G-Cter in SUMO2) linkage. Over residues 23-36 (DFEDSEDREGDPEE) the composition is skewed to acidic residues. Residues 45-55 (DTNKREGHPEP) are compositionally biased toward basic and acidic residues. Composition is skewed to acidic residues over residues 79–94 (LSEE…EDDQ) and 118–135 (EDDD…EEEQ). 11 C2H2-type zinc fingers span residues 189–211 (TICP…QRIH), 261–283 (FRCG…LRLH), 289–311 (NLCA…RRLH), 317–339 (YPCP…RRAH), 353–375 (FACG…QRIH), 381–403 (HGCG…QRVH), 409–431 (YMCS…KRTH), 437–459 (YVCR…LRVH), 465–487 (FRCG…QRTH), 493–515 (YTCI…RRIH), and 521–543 (HKCA…QKLH).

It belongs to the krueppel C2H2-type zinc-finger protein family.

Its subcellular location is the nucleus. RNA-interacting protein with a high number of miRNA targets. Acts as a damage-induced regulator of muscle remodeling by mediating the interferon gamma response in muscle cells. In Homo sapiens (Human), this protein is Zinc finger protein 697.